The following is an 843-amino-acid chain: Neuroligin-1 (843 aa).

The N-terminal stretch at 1 to 45 is a signal peptide; that stretch reads MALPRCMWPNYVWRAMMACVVHRGSGAPLTLCLLGCLLQTFHVLS. The Extracellular segment spans residues 46-697; the sequence is QKLDDVDPLV…DQRDYSTELS (652 aa). Asn-109 carries N-linked (GlcNAc...) (complex) asparagine glycosylation. Cys-117 and Cys-153 are oxidised to a cystine. The disordered stretch occupies residues 167–190; sequence LTKKHTDDLGDNDGAEDEDIRDSG. Residues 175–186 show a composition bias toward acidic residues; the sequence is LGDNDGAEDEDI. Asn-303 and Asn-343 each carry an N-linked (GlcNAc...) (complex) asparagine glycan. Disulfide bonds link Cys-342-Cys-353 and Cys-512-Cys-546. The N-linked (GlcNAc...) asparagine glycan is linked to Asn-547. The tract at residues 647 to 688 is disordered; it reads TKVPSTDITLRPTRKNSTPVTSAFPTAKQDDPKQQPSPFSVD. Polar residues predominate over residues 661 to 670; that stretch reads KNSTPVTSAF. Residues Ser-683 and Ser-686 are each glycosylated (O-linked (GalNAc...) serine). Residues 698 to 718 form a helical membrane-spanning segment; sequence VTIAVGASLLFLNILAFAALY. Residues 719 to 843 are Cytoplasmic-facing; the sequence is YKKDKRRHDV…HPHSHSTTRV (125 aa). Residues 822–843 form a disordered region; that stretch reads GGQNNTLPHPHPHPHSHSTTRV. A compositionally biased stretch (basic residues) spans 831 to 843; sequence PHPHPHSHSTTRV.

The protein belongs to the type-B carboxylesterase/lipase family. Interacts with neurexins NRXN1, NRXN2 and NRXN3. Interaction with neurexins is mediated by heparan sulfate glycan modification on neurexin. Interacts (via its C-terminus) with DLG4/PSD-95 (via PDZ domain 3). Interacts with AIP1, GOPC and PDZRN3. Interacts with NLGN3. As to expression, brain and arteries (at protein level). Expressed in olfactory bulb. Detected in brain.

Its subcellular location is the cell membrane. The protein localises to the postsynaptic density. It is found in the synaptic cleft. The protein resides in the synaptic cell membrane. Functionally, cell surface protein involved in cell-cell-interactions via its interactions with neurexin family members. Plays a role in synapse function and synaptic signal transmission, and probably mediates its effects by recruiting and clustering other synaptic proteins. May promote the initial formation of synapses, but is not essential for this. In vitro, triggers the de novo formation of presynaptic structures. May be involved in specification of excitatory synapses. Required to maintain wakefulness quality and normal synchrony of cerebral cortex activity during wakefulness and sleep. The protein is involved in nervous system development. The chain is Neuroligin-1 (Nlgn1) from Mus musculus (Mouse).